Consider the following 458-residue polypeptide: A-type ATP synthase subunit B (458 aa).

Belongs to the ATPase alpha/beta chains family. In terms of assembly, has multiple subunits with at least A(3), B(3), C, D, E, F, H, I and proteolipid K(x).

The protein resides in the cell membrane. Its function is as follows. Component of the A-type ATP synthase that produces ATP from ADP in the presence of a proton gradient across the membrane. The B chain is a regulatory subunit. The polypeptide is A-type ATP synthase subunit B (Methanocella arvoryzae (strain DSM 22066 / NBRC 105507 / MRE50)).